A 427-amino-acid polypeptide reads, in one-letter code: Flotillin-1 (427 aa).

Phosphoserine is present on residues Ser19, Ser163, and Ser385. At Thr387 the chain carries Phosphothreonine.

It belongs to the band 7/mec-2 family. Flotillin subfamily. As to quaternary structure, heterooligomeric complex of flotillin-1 and flotillin-2 and caveolin-1 and caveolin-2. Interacts with ECPAS.

Its subcellular location is the cell membrane. The protein localises to the endosome. It localises to the membrane. It is found in the caveola. The protein resides in the melanosome. Its subcellular location is the membrane raft. Its function is as follows. May act as a scaffolding protein within caveolar membranes, functionally participating in formation of caveolae or caveolae-like vesicles. In Homo sapiens (Human), this protein is Flotillin-1 (FLOT1).